The chain runs to 426 residues: Putative phosphate permease CPn_0680/CP_0067/CPj0680/CpB0707 (426 aa).

A run of 11 helical transmembrane segments spans residues 1–21 (MLPL…NIGA), 42–62 (AVVI…DRVA), 87–107 (TAAL…GWPV), 112–132 (SIVG…IIYW), 137–157 (IILI…YLIF), 180–200 (FLAA…GVIL), 207–227 (WAVS…FYYV), 260–280 (LVVE…MAFA), 313–333 (LMAF…WRVI), 364–384 (ILGL…GIGL), and 399–419 (IVLS…LFFF).

The protein belongs to the inorganic phosphate transporter (PiT) (TC 2.A.20) family.

Its subcellular location is the cell membrane. Its function is as follows. Potential transporter for phosphate. The sequence is that of Putative phosphate permease CPn_0680/CP_0067/CPj0680/CpB0707 from Chlamydia pneumoniae (Chlamydophila pneumoniae).